Consider the following 463-residue polypeptide: Exodeoxyribonuclease 7 large subunit (463 aa).

The protein belongs to the XseA family. Heterooligomer composed of large and small subunits.

It localises to the cytoplasm. The enzyme catalyses Exonucleolytic cleavage in either 5'- to 3'- or 3'- to 5'-direction to yield nucleoside 5'-phosphates.. Bidirectionally degrades single-stranded DNA into large acid-insoluble oligonucleotides, which are then degraded further into small acid-soluble oligonucleotides. In Klebsiella pneumoniae (strain 342), this protein is Exodeoxyribonuclease 7 large subunit.